A 211-amino-acid polypeptide reads, in one-letter code: UPF0319 protein VC_A0026 (211 aa).

An N-terminal signal peptide occupies residues Met-1 to Ala-21.

This sequence belongs to the UPF0319 family.

The polypeptide is UPF0319 protein VC_A0026 (Vibrio cholerae serotype O1 (strain ATCC 39315 / El Tor Inaba N16961)).